The following is an 838-amino-acid chain: V-type proton ATPase 116 kDa subunit a 1 (838 aa).

Over 1 to 388 (MGELFRSEEM…DAYGIGTYRE (388 aa)) the chain is Cytoplasmic. Residues Thr250 and Thr360 each carry the phosphothreonine modification. Tyr364 is subject to Phosphotyrosine. A helical membrane pass occupies residues 389–407 (INPAPYTIITFPFLFAVMF). Topologically, residues 408 to 409 (GD) are vacuolar. Residues 410–426 (LGHGILMTLFAVWMVLK) form a helical membrane-spanning segment. Residues 427–441 (ESRILSQKNENEMFS) lie on the Cytoplasmic side of the membrane. The chain crosses the membrane as a helical span at residues 442–471 (TIFSGRYIILLMGVFSIYTGLIYNDCFSKS). Over 472-535 (LNIFGSSWSV…ATNKLTFLNS (64 aa)) the chain is Vacuolar. A helical membrane pass occupies residues 536-555 (FKMKMSVILGIIHMLFGVSL). Residues 556–573 (SLFNHTYFKKPLNIYFGF) are Cytoplasmic-facing. The helical transmembrane segment at 574–594 (IPEIIFMTSLFGYLVILIFYK) threads the bilayer. Over 595–639 (WTAYNAKTSEKAPSLLIHFINMFLFSYGDSGNSMLYSGQKGIQCF) the chain is Vacuolar. A helical transmembrane segment spans residues 640–659 (LVVVALLCVPWMLLFKPLVL). Over 660 to 725 (RRQYLRRKHL…DTMVHQAIHT (66 aa)) the chain is Cytoplasmic. Residues 726-750 (IEYCLGCISNTASYLRLWALSLAHA) traverse the membrane as a helical segment. At 751 to 771 (QLSEVLWTMVIHIGLKVKSLA) the chain is on the vacuolar side. The chain crosses the membrane as a helical span at residues 772 to 810 (GGLALFFIFAAFATLTVAILLIMEGLSAFLHALRLHWVE). The Cytoplasmic portion of the chain corresponds to 811 to 838 (FQNKFYSGTGFKFLPFSFEHIREGKFDD).

It belongs to the V-ATPase 116 kDa subunit family. V-ATPase is a heteromultimeric enzyme made up of two complexes: the ATP-hydrolytic V1 complex and the proton translocation V0 complex. The V1 complex consists of three catalytic AB heterodimers that form a heterohexamer, three peripheral stalks each consisting of EG heterodimers, one central rotor including subunits D and F, and the regulatory subunits C and H. The proton translocation complex V0 consists of the proton transport subunit a, a ring of proteolipid subunits c9c'', rotary subunit d, subunits e and f, and the accessory subunits ATP6AP1/Ac45 and ATP6AP2/PRR. Interacts with SPAAR. In terms of tissue distribution, expressed in brain (at protein level). Expressed heart, kidney, liver, spleen, and to a lesser extent in brain.

It is found in the cytoplasmic vesicle. The protein resides in the clathrin-coated vesicle membrane. Its subcellular location is the secretory vesicle. It localises to the synaptic vesicle membrane. The protein localises to the melanosome. Subunit of the V0 complex of vacuolar(H+)-ATPase (V-ATPase), a multisubunit enzyme composed of a peripheral complex (V1) that hydrolyzes ATP and a membrane integral complex (V0) that translocates protons. V-ATPase is responsible for the acidification of various organelles, such as lysosomes, endosomes, the trans-Golgi network, and secretory granules, including synaptic vesicles. In certain cell types, can be exported to the plasma membrane, where it is involved in the acidification of the extracellular environment. Required for assembly and activity of the vacuolar ATPase. Through its action on compartment acidification, plays an essential role in neuronal development in terms of integrity and connectivity of neurons. This is V-type proton ATPase 116 kDa subunit a 1 (ATP6V0A1) from Bos taurus (Bovine).